A 261-amino-acid chain; its full sequence is tRNA pseudouridine synthase A (261 aa).

The active-site Nucleophile is aspartate 51. A substrate-binding site is contributed by tyrosine 109.

The protein belongs to the tRNA pseudouridine synthase TruA family. In terms of assembly, homodimer.

It catalyses the reaction uridine(38/39/40) in tRNA = pseudouridine(38/39/40) in tRNA. Formation of pseudouridine at positions 38, 39 and 40 in the anticodon stem and loop of transfer RNAs. The protein is tRNA pseudouridine synthase A of Shewanella sp. (strain MR-4).